The sequence spans 189 residues: Probable transcriptional regulator Rv1176c (189 aa).

This sequence belongs to the PadR family. As to quaternary structure, homodimer.

The protein resides in the cytoplasm. Functionally, probable transcriptional regulator that may help mitigate the effect of oxidative stress and help mycobacteria survive inside macrophages. Binds to its own promoter region. The sequence is that of Probable transcriptional regulator Rv1176c from Mycobacterium tuberculosis (strain ATCC 25618 / H37Rv).